The sequence spans 299 residues: GTPase Era (299 aa).

An Era-type G domain is found at 4–171 (KSGFVAILGR…VDILSENLGE (168 aa)). Residues 12-19 (GRPNVGKS) form a G1 region. 12–19 (GRPNVGKS) contacts GTP. Residues 38-42 (QTTRN) are G2. Positions 59–62 (DTPG) are G3. Residues 59 to 63 (DTPGI) and 121 to 124 (NKID) each bind GTP. Positions 121 to 124 (NKID) are G4. The interval 150–152 (ISA) is G5. In terms of domain architecture, KH type-2 spans 202 to 280 (TREEIPHSVA…FLETWVKVKK (79 aa)).

Belongs to the TRAFAC class TrmE-Era-EngA-EngB-Septin-like GTPase superfamily. Era GTPase family. As to quaternary structure, monomer.

It localises to the cytoplasm. The protein localises to the cell membrane. Functionally, an essential GTPase that binds both GDP and GTP, with rapid nucleotide exchange. Plays a role in 16S rRNA processing and 30S ribosomal subunit biogenesis and possibly also in cell cycle regulation and energy metabolism. This Streptococcus pneumoniae (strain JJA) protein is GTPase Era.